Here is a 508-residue protein sequence, read N- to C-terminus: Aldehyde dehydrogenase family 7 member A1 (508 aa).

Glycine 244–glycine 249 contributes to the NAD(+) binding site. Glutamate 266 (proton acceptor) is an active-site residue. The Nucleophile role is filled by cysteine 300.

It belongs to the aldehyde dehydrogenase family. Homotetramer.

It carries out the reaction an aldehyde + NAD(+) + H2O = a carboxylate + NADH + 2 H(+). Functionally, may play a role in fruit development. This Malus domestica (Apple) protein is Aldehyde dehydrogenase family 7 member A1.